We begin with the raw amino-acid sequence, 404 residues long: UPF0674 endoplasmic reticulum membrane protein YNR021W (404 aa).

N-acetylserine is present on Ser2. An N-linked (GlcNAc...) asparagine glycan is attached at Asn44. The chain crosses the membrane as a helical span at residues 49 to 68; sequence LCALGVLFLVYAFYKFGNSV. Asn98 carries an N-linked (GlcNAc...) asparagine glycan. Residues 369-404 form a disordered region; that stretch reads AKRRQLKASGQQEKVDQKMKEKRERRLKNKQRTRFQ. Over residues 381–392 the composition is skewed to basic and acidic residues; that stretch reads EKVDQKMKEKRE. The span at 393–404 shows a compositional bias: basic residues; the sequence is RRLKNKQRTRFQ.

The protein belongs to the UPF0674 family.

The protein localises to the endoplasmic reticulum membrane. The protein is UPF0674 endoplasmic reticulum membrane protein YNR021W of Saccharomyces cerevisiae (strain ATCC 204508 / S288c) (Baker's yeast).